The sequence spans 287 residues: MPDELKPHFANVQAHYDLSDDFFRLFLDPTQTYSCAYFERDDMTLQEAQIAKIDLALGKLGLQPGMTLLDVGCGWGATMMRAVEKYDVNVVGLTLSKNQANHVQQLVANSENLRSKRVLLAGWEQFDEPVDRIVSIGAFEHFGHERYDAFFSLAHRLLPADGVMLLHTITGLHPKEIHERGLPMSFTFARFLKFIVTEIFPGGRLPSIPMVQECASANGFTVTRVQSLQPHYAKTLDLWSAALQANKGQAIALQSEEVYERYMKYLTGCAEMFRIGYIDVNQFTCQK.

S-adenosyl-L-methionine is bound by residues 33-34 (YS), 68-76 (LLDVGCGWG), 94-99 (TLSKNQ), and 123-124 (WE). Cys269 is a catalytic residue.

The protein belongs to the CFA/CMAS family. In terms of assembly, homodimer.

It localises to the cytoplasm. It catalyses the reaction a 1-acyl-2-(9Z)-enoyl-sn-glycero-3-phospholipid + S-adenosyl-L-methionine = a 1-acyl-2-(9-cyclopronane)-acyl-sn-glycero-3-phospholipid + S-adenosyl-L-homocysteine + H(+). It participates in lipid metabolism; mycolic acid biosynthesis. Its function is as follows. Catalyzes the conversion of a double bond to a cyclopropane ring at the distal position of an alpha mycolic acid via the transfer of a methylene group from S-adenosyl-L-methionine. Cyclopropanated mycolic acids are key factors participating in cell envelope permeability, host immunomodulation and persistence. The sequence is that of Cyclopropane mycolic acid synthase 1 (cmaA1) from Mycobacterium tuberculosis (strain ATCC 25177 / H37Ra).